We begin with the raw amino-acid sequence, 1178 residues long: Phytochrome B (1178 aa).

Residues 1-15 (MASGSRATPTRSPSS) are compositionally biased toward polar residues. The disordered stretch occupies residues 1-58 (MASGSRATPTRSPSSARPEAPRHAHHHHHHHSQSSGGSTSRAGGGGGGGGGGGGTAAT). Residues 23–32 (HAHHHHHHHS) are compositionally biased toward basic residues. Residues 42–55 (AGGGGGGGGGGGGT) are compositionally biased toward gly residues. Residues 267–449 (DIKLLCDTVV…AFGLQLNMEL (183 aa)) enclose the GAF domain. Cys372 is a binding site for phytochromobilin. 2 consecutive PAS domains span residues 668–739 (VARE…LRGE) and 802–873 (DYKA…MVVI). The Histidine kinase domain occupies 950-1170 (YICQEIKNPL…LIVLELPQPR (221 aa)).

It belongs to the phytochrome family. Homodimer. Contains one covalently linked phytochromobilin chromophore.

Regulatory photoreceptor which exists in two forms that are reversibly interconvertible by light: the Pr form that absorbs maximally in the red region of the spectrum and the Pfr form that absorbs maximally in the far-red region. Photoconversion of Pr to Pfr induces an array of morphogenic responses, whereas reconversion of Pfr to Pr cancels the induction of those responses. Pfr controls the expression of a number of nuclear genes including those encoding the small subunit of ribulose-bisphosphate carboxylase, chlorophyll A/B binding protein, protochlorophyllide reductase, rRNA, etc. It also controls the expression of its own gene(s) in a negative feedback fashion. The polypeptide is Phytochrome B (PHYB) (Sorghum bicolor (Sorghum)).